The sequence spans 78 residues: Large ribosomal subunit protein bL28 (78 aa).

The interval 1 to 28 is disordered; that stretch reads MSRRCQVRGTKPEFGNNVSHSQRHTKRR.

The protein belongs to the bacterial ribosomal protein bL28 family.

This chain is Large ribosomal subunit protein bL28, found in Cutibacterium acnes (strain DSM 16379 / KPA171202) (Propionibacterium acnes).